A 412-amino-acid polypeptide reads, in one-letter code: D-nopaline dehydrogenase (412 aa).

The protein belongs to the lysopine/nopaline/octopine/opine/vitopine dehydrogenases family. As to quaternary structure, homotetramer.

The enzyme catalyses D-nopaline + NADP(+) + H2O = L-arginine + 2-oxoglutarate + NADPH + H(+). This is D-nopaline dehydrogenase (nos) from Agrobacterium vitis (Rhizobium vitis).